The primary structure comprises 226 residues: Enolase-phosphatase E1 (226 aa).

It belongs to the HAD-like hydrolase superfamily. MasA/MtnC family. Monomer. Mg(2+) is required as a cofactor.

It carries out the reaction 5-methylsulfanyl-2,3-dioxopentyl phosphate + H2O = 1,2-dihydroxy-5-(methylsulfanyl)pent-1-en-3-one + phosphate. It participates in amino-acid biosynthesis; L-methionine biosynthesis via salvage pathway; L-methionine from S-methyl-5-thio-alpha-D-ribose 1-phosphate: step 3/6. The protein operates within amino-acid biosynthesis; L-methionine biosynthesis via salvage pathway; L-methionine from S-methyl-5-thio-alpha-D-ribose 1-phosphate: step 4/6. In terms of biological role, bifunctional enzyme that catalyzes the enolization of 2,3-diketo-5-methylthiopentyl-1-phosphate (DK-MTP-1-P) into the intermediate 2-hydroxy-3-keto-5-methylthiopentenyl-1-phosphate (HK-MTPenyl-1-P), which is then dephosphorylated to form the acireductone 1,2-dihydroxy-3-keto-5-methylthiopentene (DHK-MTPene). This Shewanella sp. (strain ANA-3) protein is Enolase-phosphatase E1.